The following is a 233-amino-acid chain: Lactate utilization protein C (233 aa).

The protein belongs to the LutC/YkgG family.

Its function is as follows. Is involved in L-lactate degradation and allows cells to grow with lactate as the sole carbon source. In Oceanobacillus iheyensis (strain DSM 14371 / CIP 107618 / JCM 11309 / KCTC 3954 / HTE831), this protein is Lactate utilization protein C.